We begin with the raw amino-acid sequence, 496 residues long: Angiopoietin-2 (496 aa).

The N-terminal stretch at 1-18 is a signal peptide; the sequence is MWQLVFFALSCDLVLAAA. Residues Asn89, Asn119, Asn133, Asn151, Asn240, and Asn304 are each glycosylated (N-linked (GlcNAc...) asparagine). A coiled-coil region spans residues 130-255; sequence NLLNQTAEQT…KQQHDLMETV (126 aa). The Fibrinogen C-terminal domain maps to 275 to 495; that stretch reads KEEQIIFRDC…ATTMMIRPAD (221 aa). Cys284 and Cys313 are disulfide-bonded. 4 residues coordinate Ca(2+): Asp429, Asp431, Cys433, and Cys435. 2 disulfide bridges follow: Cys433–Cys435 and Cys437–Cys450.

Interacts with TEK/TIE2, competing for the same binding site as ANGPT1. Interacts with ITGA5. Interacts with SVEP1/polydom. Interacts with THBD; this interaction significantly inhibits the generation of activated PC and TAFIa/CPB2 by the thrombin/thrombomodulin complex.

Its subcellular location is the secreted. Its function is as follows. Binds to TEK/TIE2, competing for the ANGPT1 binding site, and modulating ANGPT1 signaling. Can induce tyrosine phosphorylation of TEK/TIE2 in the absence of ANGPT1. In the absence of angiogenic inducers, such as VEGF, ANGPT2-mediated loosening of cell-matrix contacts may induce endothelial cell apoptosis with consequent vascular regression. In concert with VEGF, it may facilitate endothelial cell migration and proliferation, thus serving as a permissive angiogenic signal. Involved in the regulation of lymphangiogenesis. In Sus scrofa (Pig), this protein is Angiopoietin-2 (ANGPT2).